The sequence spans 251 residues: Octanoyltransferase (251 aa).

The 186-residue stretch at 56–241 (AETPDEIWIV…NLDGASAAAD (186 aa)) folds into the BPL/LPL catalytic domain. Substrate contacts are provided by residues 96 to 103 (RGGQITYH), 168 to 170 (ALG), and 181 to 183 (GLS). C199 acts as the Acyl-thioester intermediate in catalysis.

The protein belongs to the LipB family.

It is found in the cytoplasm. It catalyses the reaction octanoyl-[ACP] + L-lysyl-[protein] = N(6)-octanoyl-L-lysyl-[protein] + holo-[ACP] + H(+). Its pathway is protein modification; protein lipoylation via endogenous pathway; protein N(6)-(lipoyl)lysine from octanoyl-[acyl-carrier-protein]: step 1/2. Functionally, catalyzes the transfer of endogenously produced octanoic acid from octanoyl-acyl-carrier-protein onto the lipoyl domains of lipoate-dependent enzymes. Lipoyl-ACP can also act as a substrate although octanoyl-ACP is likely to be the physiological substrate. The polypeptide is Octanoyltransferase (Burkholderia vietnamiensis (strain G4 / LMG 22486) (Burkholderia cepacia (strain R1808))).